The following is a 194-amino-acid chain: RNA polymerase II subunit A C-terminal domain phosphatase SSU72 like protein 3 (194 aa).

The protein belongs to the SSU72 phosphatase family.

The protein localises to the nucleus. It catalyses the reaction O-phospho-L-seryl-[protein] + H2O = L-seryl-[protein] + phosphate. The catalysed reaction is O-phospho-L-threonyl-[protein] + H2O = L-threonyl-[protein] + phosphate. In terms of biological role, protein phosphatase that catalyzes the dephosphorylation of the C-terminal domain of RNA polymerase II. Plays a role in RNA processing and termination. This is RNA polymerase II subunit A C-terminal domain phosphatase SSU72 like protein 3 from Homo sapiens (Human).